We begin with the raw amino-acid sequence, 59 residues long: Large ribosomal subunit protein bL32 (59 aa).

Residues 1–16 (MAVPKRKTSPSRRGMR) show a composition bias toward basic residues. The tract at residues 1 to 59 (MAVPKRKTSPSRRGMRRSADALKAPTYVEDKNSGELRRPHHIDLKSGMYRGRQVLEPKE) is disordered. A compositionally biased stretch (basic and acidic residues) spans 28–44 (VEDKNSGELRRPHHIDL).

The protein belongs to the bacterial ribosomal protein bL32 family.

The chain is Large ribosomal subunit protein bL32 from Brucella abortus (strain S19).